Here is a 393-residue protein sequence, read N- to C-terminus: Phosphoglycerate kinase (393 aa).

Substrate is bound by residues 21–23 (DIN), Arg-36, 59–62 (HFGR), Arg-114, and Arg-147. Residues Lys-197, Glu-319, and 349 to 352 (GGDT) contribute to the ATP site.

It belongs to the phosphoglycerate kinase family. Monomer.

It is found in the cytoplasm. It catalyses the reaction (2R)-3-phosphoglycerate + ATP = (2R)-3-phospho-glyceroyl phosphate + ADP. The protein operates within carbohydrate degradation; glycolysis; pyruvate from D-glyceraldehyde 3-phosphate: step 2/5. The protein is Phosphoglycerate kinase of Dinoroseobacter shibae (strain DSM 16493 / NCIMB 14021 / DFL 12).